Here is a 309-residue protein sequence, read N- to C-terminus: Homoserine O-acetyltransferase (309 aa).

Catalysis depends on C142, which acts as the Acyl-thioester intermediate. Residues K163 and S192 each coordinate substrate. H235 (proton acceptor) is an active-site residue. Residue E237 is part of the active site. Substrate is bound at residue R249.

It belongs to the MetA family.

Its subcellular location is the cytoplasm. It carries out the reaction L-homoserine + acetyl-CoA = O-acetyl-L-homoserine + CoA. It participates in amino-acid biosynthesis; L-methionine biosynthesis via de novo pathway; O-acetyl-L-homoserine from L-homoserine: step 1/1. Functionally, transfers an acetyl group from acetyl-CoA to L-homoserine, forming acetyl-L-homoserine. This Methanomethylophilus alvi (strain Mx1201) protein is Homoserine O-acetyltransferase.